Here is a 100-residue protein sequence, read N- to C-terminus: UPF0213 protein CKO_04549 (100 aa).

The GIY-YIG domain maps to 2–77; sequence TPWYLYLIRT…KRLTKRQKER (76 aa).

The protein belongs to the UPF0213 family.

This Citrobacter koseri (strain ATCC BAA-895 / CDC 4225-83 / SGSC4696) protein is UPF0213 protein CKO_04549.